The chain runs to 707 residues: Polyribonucleotide nucleotidyltransferase (707 aa).

2 residues coordinate Mg(2+): Asp-491 and Asp-497. The KH domain maps to 558-617 (PRIEKIKIHPDKIGLLIGPGGKTIKKISAESGAEITIEDDGTVMIYSSSADSLEAAREMI). Residues 622–695 (GEVTVGGIYR…EKGRYKFSRK (74 aa)) enclose the S1 motif domain.

This sequence belongs to the polyribonucleotide nucleotidyltransferase family. Mg(2+) is required as a cofactor.

The protein localises to the cytoplasm. It catalyses the reaction RNA(n+1) + phosphate = RNA(n) + a ribonucleoside 5'-diphosphate. Its function is as follows. Involved in mRNA degradation. Catalyzes the phosphorolysis of single-stranded polyribonucleotides processively in the 3'- to 5'-direction. This chain is Polyribonucleotide nucleotidyltransferase, found in Methylacidiphilum infernorum (isolate V4) (Methylokorus infernorum (strain V4)).